Consider the following 212-residue polypeptide: Large ribosomal subunit protein uL3 (212 aa).

Residues 133–156 form a disordered region; that stretch reads SMTHGSKNHRLPGSTGAGTTPGRV.

The protein belongs to the universal ribosomal protein uL3 family. Part of the 50S ribosomal subunit. Forms a cluster with proteins L14 and L19.

In terms of biological role, one of the primary rRNA binding proteins, it binds directly near the 3'-end of the 23S rRNA, where it nucleates assembly of the 50S subunit. This is Large ribosomal subunit protein uL3 from Crocosphaera subtropica (strain ATCC 51142 / BH68) (Cyanothece sp. (strain ATCC 51142)).